The primary structure comprises 165 residues: Phosphopantetheine adenylyltransferase (165 aa).

Threonine 10 is a substrate binding site. ATP-binding positions include threonine 10–phenylalanine 11 and histidine 18. Residues lysine 42, leucine 75, and arginine 89 each coordinate substrate. Residues glycine 90–arginine 92, glutamate 100, and tyrosine 125–threonine 131 each bind ATP.

Belongs to the bacterial CoaD family. As to quaternary structure, homohexamer. Requires Mg(2+) as cofactor.

The protein resides in the cytoplasm. The catalysed reaction is (R)-4'-phosphopantetheine + ATP + H(+) = 3'-dephospho-CoA + diphosphate. It participates in cofactor biosynthesis; coenzyme A biosynthesis; CoA from (R)-pantothenate: step 4/5. Reversibly transfers an adenylyl group from ATP to 4'-phosphopantetheine, yielding dephospho-CoA (dPCoA) and pyrophosphate. This Chlorobaculum tepidum (strain ATCC 49652 / DSM 12025 / NBRC 103806 / TLS) (Chlorobium tepidum) protein is Phosphopantetheine adenylyltransferase.